Reading from the N-terminus, the 305-residue chain is Target of rapamycin complex subunit LST8-1 (305 aa).

WD repeat units follow at residues 1 to 30 (MSQP…CYRT), 33 to 71 (YPDS…PQPV), 76 to 115 (SHTN…CQKE), 117 to 156 (ESVA…CSCE), 160 to 199 (EVDT…QTMT), 209 to 248 (AHNG…LEKV), and 251 to 292 (GHQR…KVYQ).

It belongs to the WD repeat LST8 family. In terms of assembly, the target of rapamycin complex 1 (TORC1) is composed of at least RAPTOR, LST8 and TOR. Interacts with TOR. Expressed in the root central cylinder, root tips, emerging lateral roots, vasculature of cotyledons, leaf stomata, leaf stipules, anthers, pollen, filaments, and vasculature of petals and sepals.

It localises to the endosome. Its function is as follows. Component of TORC1 complex, which is an essential cell growth regulator that controls plant development. Acts by activating transcription, protein synthesis and ribosome biogenesis, and inhibiting mRNA degradation and autophagy. Involved in regulating amino acid accumulation and the synthesis of myo-inositol and raffinose during plant adaptation to long days. Involved in the regulation of plant growth and abscisic acid (ABA) accumulation. Acts as a positive regulation of the ABA biosynthetic genes ZEP, NCED3 and AAO3, and negative regulator of the ABA catabolic genes CYP707A2 and CYP707A3. The sequence is that of Target of rapamycin complex subunit LST8-1 from Arabidopsis thaliana (Mouse-ear cress).